The sequence spans 137 residues: Basic phospholipase A2 homolog Cax-K49 (137 aa).

A signal peptide spans 1–16 (MRTFWIVAMLLVGVEG). Disulfide bonds link Cys-42-Cys-131, Cys-44-Cys-60, Cys-59-Cys-111, Cys-65-Cys-137, Cys-66-Cys-104, Cys-73-Cys-97, and Cys-91-Cys-102. Positions 121-133 (KKYKIYPKFLCKK) are important for membrane-damaging activities in eukaryotes and bacteria; heparin-binding.

In terms of assembly, homodimer; non-covalently linked. In terms of tissue distribution, expressed by the venom gland.

It localises to the secreted. Snake venom phospholipase A2 homolog that lacks enzymatic activity. Displays edema-inducing activities and may be myotoxic. A model of myotoxic mechanism has been proposed: an apo Lys49-PLA2 is activated by the entrance of a hydrophobic molecule (e.g. fatty acid) at the hydrophobic channel of the protein leading to a reorientation of a monomer. This reorientation causes a transition between 'inactive' to 'active' states, causing alignment of C-terminal and membrane-docking sites (MDoS) side-by-side and putting the membrane-disruption sites (MDiS) in the same plane, exposed to solvent and in a symmetric position for both monomers. The MDoS region stabilizes the toxin on membrane by the interaction of charged residues with phospholipid head groups. Subsequently, the MDiS region destabilizes the membrane with penetration of hydrophobic residues. This insertion causes a disorganization of the membrane, allowing an uncontrolled influx of ions (i.e. calcium and sodium), and eventually triggering irreversible intracellular alterations and cell death. The polypeptide is Basic phospholipase A2 homolog Cax-K49 (Crotalus atrox (Western diamondback rattlesnake)).